The chain runs to 1406 residues: DNA-directed RNA polymerase subunit beta' (1406 aa).

The Zn(2+) site is built by Cys72, Cys74, Cys87, and Cys90. The Mg(2+) site is built by Asp462, Asp464, and Asp466. Cys816, Cys889, Cys896, and Cys899 together coordinate Zn(2+).

The protein belongs to the RNA polymerase beta' chain family. The RNAP catalytic core consists of 2 alpha, 1 beta, 1 beta' and 1 omega subunit. When a sigma factor is associated with the core the holoenzyme is formed, which can initiate transcription. Mg(2+) serves as cofactor. Zn(2+) is required as a cofactor.

It catalyses the reaction RNA(n) + a ribonucleoside 5'-triphosphate = RNA(n+1) + diphosphate. Its function is as follows. DNA-dependent RNA polymerase catalyzes the transcription of DNA into RNA using the four ribonucleoside triphosphates as substrates. The chain is DNA-directed RNA polymerase subunit beta' from Psychrobacter sp. (strain PRwf-1).